A 941-amino-acid chain; its full sequence is Translation initiation factor IF-2 (941 aa).

Residues 170 to 209 show a composition bias toward basic and acidic residues; sequence DAQKAEVDAQKAEAEKPVEVKADESAIEEKKRVAAEESKK. Disordered stretches follow at residues 170–228 and 252–351; these read DAQK…KAAA and RAIK…SNFQ. Positions 256 to 269 are enriched in low complexity; sequence APEPVAPVAKPAAE. Over residues 271-297 the composition is skewed to basic and acidic residues; that stretch reads TLHKPADKKPGEKKDEKKPAVTADKKS. Polar residues predominate over residues 299 to 308; it reads KSANVSSTWQ. The tr-type G domain occupies 441-610; that stretch reads PRAPVVTVMG…LLQAEVLELK (170 aa). Positions 450-457 are G1; sequence GHVDHGKT. Position 450–457 (450–457) interacts with GTP; sequence GHVDHGKT. The interval 475 to 479 is G2; it reads GITQH. Positions 496–499 are G3; sequence DTPG. Residues 496 to 500 and 550 to 553 contribute to the GTP site; these read DTPGH and NKID. A G4 region spans residues 550 to 553; sequence NKID. The segment at 586–588 is G5; the sequence is SAK.

Belongs to the TRAFAC class translation factor GTPase superfamily. Classic translation factor GTPase family. IF-2 subfamily.

It is found in the cytoplasm. Its function is as follows. One of the essential components for the initiation of protein synthesis. Protects formylmethionyl-tRNA from spontaneous hydrolysis and promotes its binding to the 30S ribosomal subunits. Also involved in the hydrolysis of GTP during the formation of the 70S ribosomal complex. The polypeptide is Translation initiation factor IF-2 (Herminiimonas arsenicoxydans).